Reading from the N-terminus, the 816-residue chain is Chitin synthase 1 (816 aa).

Residues 1 to 21 (MLSQGEILRNPSRTRLQRPPK) form a disordered region. Topologically, residues 1–32 (MLSQGEILRNPSRTRLQRPPKSRSERKGWWYR) are cytoplasmic. Residues 33–53 (VTIFLTCLIPNFMLRCFGMTT) form a helical membrane-spanning segment. Residues 54-63 (PEVQHAWREK) are Extracellular-facing. A helical transmembrane segment spans residues 64–84 (VALCICIFFCWIILGFTTYGM). The Cytoplasmic segment spans residues 85–240 (NTIICKGSNQ…TPGCLLADTM (156 aa)). A helical membrane pass occupies residues 241–261 (FWITTISIFGLIITKFLLGFF). At 262–697 (YSWYAKRRPK…QLVVVMELFG (436 aa)) the chain is on the extracellular side. N-linked (GlcNAc...) asparagine glycans are attached at residues asparagine 319 and asparagine 664. Residues 698 to 718 (TLVLPAAIIFTFVMIAVSILI) form a helical membrane-spanning segment. Over 719 to 720 (EP) the chain is Cytoplasmic. Residues 721 to 741 (AWVPLIMLVGIFGLPAVLILI) traverse the membrane as a helical segment. At 742–745 (TTME) the chain is on the extracellular side. A helical membrane pass occupies residues 746 to 766 (IQYVFWCLVYILSIPIWNFVL). Residues 767-816 (PTYAFWHFDNFSWGDTRKVDGEGKEDEEGEFDHTKIRIRELEEFLSEANK) are Cytoplasmic-facing.

It belongs to the chitin synthase family. Class IV subfamily.

It localises to the cell membrane. It carries out the reaction [(1-&gt;4)-N-acetyl-beta-D-glucosaminyl](n) + UDP-N-acetyl-alpha-D-glucosamine = [(1-&gt;4)-N-acetyl-beta-D-glucosaminyl](n+1) + UDP + H(+). Its function is as follows. Polymerizes chitin, a structural polymer of the cell wall and septum, by transferring the sugar moiety of UDP-GlcNAc to the non-reducing end of the growing chitin polymer. This is Chitin synthase 1 (CHS1) from Encephalitozoon cuniculi (strain GB-M1) (Microsporidian parasite).